Reading from the N-terminus, the 108-residue chain is Vacuolar ATPase assembly integral membrane protein VMA21 (108 aa).

Topologically, residues 1-34 (MASRRSAAAKKEDFSFEAAATQSAHEAQEGFPSS) are cytoplasmic. The helical transmembrane segment at 35–55 (VIIKLVLVTVAMICAPLGTYF) threads the bilayer. At 56 to 68 (GTLNTICGGDSSY) the chain is on the lumenal side. The helical transmembrane segment at 69–89 (AGALAAISVNVVLIIYLIIAA) threads the bilayer. Topologically, residues 90-108 (REDTGESEEERKGKEGKEE) are cytoplasmic.

It belongs to the VMA21 family.

It is found in the endoplasmic reticulum membrane. It localises to the endoplasmic reticulum-Golgi intermediate compartment membrane. The protein resides in the cytoplasmic vesicle. Its subcellular location is the COPII-coated vesicle membrane. Its function is as follows. Required for the assembly of the V0 complex of the vacuolar ATPase (V-ATPase) in the endoplasmic reticulum. The chain is Vacuolar ATPase assembly integral membrane protein VMA21 from Ajellomyces capsulatus (strain NAm1 / WU24) (Darling's disease fungus).